Consider the following 259-residue polypeptide: NAP1-related protein 1 (259 aa).

Residues Met-1–Gly-15 show a composition bias toward basic and acidic residues. A disordered region spans residues Met-1–Pro-20. A coiled-coil region spans residues Val-21–Arg-62. The segment at Glu-228–Asn-259 is disordered.

This sequence belongs to the nucleosome assembly protein (NAP) family.

It localises to the nucleus. The protein resides in the cytoplasm. Acts as a histone H2A/H2B chaperone in nucleosome assembly. This Oryza sativa subsp. indica (Rice) protein is NAP1-related protein 1.